The sequence spans 519 residues: Cilia- and flagella-associated protein 157 (519 aa).

A compositionally biased stretch (basic residues) spans 1–11; that stretch reads MPPKKKGKRGP. Positions 1–25 are disordered; it reads MPPKKKGKRGPSAKTKEKETVRVAS. Coiled coils occupy residues 28-185 and 241-356; these read VTEQ…EKKV and IELI…QRTL.

It belongs to the CFAP157 family.

It localises to the cytoplasm. Its subcellular location is the cytoskeleton. It is found in the cilium basal body. Specifically required during spermatogenesis for flagellum morphogenesis and sperm motility. This chain is Cilia- and flagella-associated protein 157, found in Xenopus tropicalis (Western clawed frog).